Reading from the N-terminus, the 340-residue chain is Probable peroxidase 61 (340 aa).

Residues 1–25 form the signal peptide; that stretch reads MQFVNFFPLLALVVISLAGKATVEA. 4 disulfides stabilise this stretch: Cys-46–Cys-122, Cys-79–Cys-84, Cys-128–Cys-331, and Cys-205–Cys-237. Asn-63 carries N-linked (GlcNAc...) asparagine glycosylation. Arg-73 is a catalytic residue. Residues Asp-78, Val-81, Gly-83, Asp-85, and Ser-87 each coordinate Ca(2+). Pro-168 contacts substrate. A heme b-binding site is contributed by His-198. Position 199 (Ser-199) interacts with Ca(2+). N-linked (GlcNAc...) asparagine glycosylation occurs at Asn-226. Residues Asp-255 and Ser-258 each contribute to the Ca(2+) site.

This sequence belongs to the peroxidase family. Classical plant (class III) peroxidase subfamily. Requires heme b as cofactor. It depends on Ca(2+) as a cofactor.

The protein localises to the secreted. The catalysed reaction is 2 a phenolic donor + H2O2 = 2 a phenolic radical donor + 2 H2O. Removal of H(2)O(2), oxidation of toxic reductants, biosynthesis and degradation of lignin, suberization, auxin catabolism, response to environmental stresses such as wounding, pathogen attack and oxidative stress. The enzyme activity has to be proved. The polypeptide is Probable peroxidase 61 (PER61) (Arabidopsis thaliana (Mouse-ear cress)).